Here is a 155-residue protein sequence, read N- to C-terminus: Ciliary microtubule inner protein 2C (155 aa).

It belongs to the CIMIP2 family.

The protein localises to the cytoplasm. It is found in the cytoskeleton. Its subcellular location is the cilium axoneme. In terms of biological role, microtubule inner protein (MIP) part of the dynein-decorated doublet microtubules (DMTs) in cilia axoneme, which is required for motile cilia beating. In Xenopus tropicalis (Western clawed frog), this protein is Ciliary microtubule inner protein 2C (cimip2c).